A 350-amino-acid chain; its full sequence is MAYKITSLAGDGIGPEIMASGIKILEAIAAKYNHTFEIESHPFGGAGIDAAGDPIPPETLKACQNADAILLGAIGGPKWDNAPKRPEDGLLALRKALGLFANIRPIQVPSSITHLSPLKKEIVENTDFVVVRELTGGLYFGEPKHWDDVAAVDSLTYTRVEIERIIEKAFEIASTRNKKVTSVDKANVLASSKLWRKIAEEVASRHPDITLEHLYVDAAAMLMIQRPTTFDVIVTENLFGDILSDEASVITGSLGMLPSASHAENGPSLYEPIHGSAPDIANQNIANPMSMISSVSMMLRQSFSLFKEADAIDAATARTMQAGFLTADLGGNTSTTDFTNEVLKQIEGGE.

Residue 76–87 (GPKWDNAPKRPE) coordinates NAD(+). 4 residues coordinate substrate: Arg-94, Arg-104, Arg-132, and Asp-217. Mg(2+)-binding residues include Asp-217, Asp-241, and Asp-245. 275-287 (GSAPDIANQNIAN) contributes to the NAD(+) binding site.

It belongs to the isocitrate and isopropylmalate dehydrogenases family. LeuB type 1 subfamily. Homodimer. Requires Mg(2+) as cofactor. Mn(2+) serves as cofactor.

It localises to the cytoplasm. The enzyme catalyses (2R,3S)-3-isopropylmalate + NAD(+) = 4-methyl-2-oxopentanoate + CO2 + NADH. Its pathway is amino-acid biosynthesis; L-leucine biosynthesis; L-leucine from 3-methyl-2-oxobutanoate: step 3/4. Catalyzes the oxidation of 3-carboxy-2-hydroxy-4-methylpentanoate (3-isopropylmalate) to 3-carboxy-4-methyl-2-oxopentanoate. The product decarboxylates to 4-methyl-2 oxopentanoate. This chain is 3-isopropylmalate dehydrogenase, found in Listeria innocua serovar 6a (strain ATCC BAA-680 / CLIP 11262).